A 474-amino-acid chain; its full sequence is ATP synthase subunit beta 2 (474 aa).

151–158 (GGAGVGKT) lines the ATP pocket.

Belongs to the ATPase alpha/beta chains family. In terms of assembly, F-type ATPases have 2 components, CF(1) - the catalytic core - and CF(0) - the membrane proton channel. CF(1) has five subunits: alpha(3), beta(3), gamma(1), delta(1), epsilon(1). CF(0) has four main subunits: a(1), b(1), b'(1) and c(9-12).

Its subcellular location is the cell inner membrane. It catalyses the reaction ATP + H2O + 4 H(+)(in) = ADP + phosphate + 5 H(+)(out). In terms of biological role, produces ATP from ADP in the presence of a proton gradient across the membrane. The catalytic sites are hosted primarily by the beta subunits. This is ATP synthase subunit beta 2 from Dinoroseobacter shibae (strain DSM 16493 / NCIMB 14021 / DFL 12).